Reading from the N-terminus, the 473-residue chain is Ribulose bisphosphate carboxylase large chain 2 (473 aa).

Residues asparagine 116 and threonine 166 each coordinate substrate. Lysine 168 (proton acceptor) is an active-site residue. Lysine 170 is a substrate binding site. Residues lysine 194, aspartate 196, and glutamate 197 each contribute to the Mg(2+) site. N6-carboxylysine is present on lysine 194. Residue histidine 287 is the Proton acceptor of the active site. Substrate is bound by residues arginine 288, histidine 320, and serine 372.

The protein belongs to the RuBisCO large chain family. Type I subfamily. Heterohexadecamer of 8 large chains and 8 small chains. Requires Mg(2+) as cofactor.

The enzyme catalyses 2 (2R)-3-phosphoglycerate + 2 H(+) = D-ribulose 1,5-bisphosphate + CO2 + H2O. It carries out the reaction D-ribulose 1,5-bisphosphate + O2 = 2-phosphoglycolate + (2R)-3-phosphoglycerate + 2 H(+). Functionally, ruBisCO catalyzes two reactions: the carboxylation of D-ribulose 1,5-bisphosphate, the primary event in carbon dioxide fixation, as well as the oxidative fragmentation of the pentose substrate. Both reactions occur simultaneously and in competition at the same active site. The protein is Ribulose bisphosphate carboxylase large chain 2 of Cereibacter sphaeroides (strain ATCC 17025 / ATH 2.4.3) (Rhodobacter sphaeroides).